Consider the following 498-residue polypeptide: GTPase Der (498 aa).

EngA-type G domains lie at 3–166 (PVVA…FEEL) and 212–385 (IKFA…RSAT). GTP is bound by residues 9–16 (GRPNVGKS), 56–60 (DTGGI), 118–121 (NKTD), 218–225 (GRPNVGKS), 265–269 (DTAGV), and 330–333 (NKWD). The 85-residue stretch at 386 to 470 (KRISTSMLTR…PIHIEFQEGD (85 aa)) folds into the KH-like domain.

This sequence belongs to the TRAFAC class TrmE-Era-EngA-EngB-Septin-like GTPase superfamily. EngA (Der) GTPase family. In terms of assembly, associates with the 50S ribosomal subunit.

Functionally, GTPase that plays an essential role in the late steps of ribosome biogenesis. The protein is GTPase Der of Tolumonas auensis (strain DSM 9187 / NBRC 110442 / TA 4).